The primary structure comprises 289 residues: Protease HtpX homolog (289 aa).

2 consecutive transmembrane segments (helical) span residues 7–26 (TAALLAALSGLLIAISYWVI) and 31–48 (GLIIGIGLAAVTNLFSWY). Residue His-132 participates in Zn(2+) binding. Glu-133 is an active-site residue. His-136 provides a ligand contact to Zn(2+). 2 consecutive transmembrane segments (helical) span residues 151-171 (VAGAISFLAQMVSYSLWFGGG) and 182-202 (LGVLLTVMLAPLAATIIQLAI). Residue Glu-207 participates in Zn(2+) binding.

It belongs to the peptidase M48B family. It depends on Zn(2+) as a cofactor.

It localises to the cell inner membrane. This chain is Protease HtpX homolog, found in Nostoc punctiforme (strain ATCC 29133 / PCC 73102).